The sequence spans 257 residues: Type III pantothenate kinase (257 aa).

6-13 (DVGNTNTV) provides a ligand contact to ATP. Substrate contacts are provided by residues Y100 and 107 to 110 (GADR). Residue D109 is the Proton acceptor of the active site. Residue D129 coordinates K(+). T132 serves as a coordination point for ATP. Position 185 (T185) interacts with substrate.

This sequence belongs to the type III pantothenate kinase family. As to quaternary structure, homodimer. NH4(+) is required as a cofactor. K(+) serves as cofactor.

The protein localises to the cytoplasm. The catalysed reaction is (R)-pantothenate + ATP = (R)-4'-phosphopantothenate + ADP + H(+). It participates in cofactor biosynthesis; coenzyme A biosynthesis; CoA from (R)-pantothenate: step 1/5. Its function is as follows. Catalyzes the phosphorylation of pantothenate (Pan), the first step in CoA biosynthesis. The chain is Type III pantothenate kinase from Desulfatibacillum aliphaticivorans.